A 172-amino-acid polypeptide reads, in one-letter code: Lipoprotein signal peptidase (172 aa).

The next 4 membrane-spanning stretches (helical) occupy residues Leu-4–Val-24, Val-39–Phe-59, Trp-69–Leu-89, and Trp-93–Asp-113. Catalysis depends on residues Asp-122 and Asp-140. Residues Phe-136–Trp-156 traverse the membrane as a helical segment.

This sequence belongs to the peptidase A8 family.

The protein localises to the cell inner membrane. It catalyses the reaction Release of signal peptides from bacterial membrane prolipoproteins. Hydrolyzes -Xaa-Yaa-Zaa-|-(S,diacylglyceryl)Cys-, in which Xaa is hydrophobic (preferably Leu), and Yaa (Ala or Ser) and Zaa (Gly or Ala) have small, neutral side chains.. It participates in protein modification; lipoprotein biosynthesis (signal peptide cleavage). Functionally, this protein specifically catalyzes the removal of signal peptides from prolipoproteins. The polypeptide is Lipoprotein signal peptidase (Hydrogenovibrio crunogenus (strain DSM 25203 / XCL-2) (Thiomicrospira crunogena)).